A 93-amino-acid polypeptide reads, in one-letter code: Protein 6 (93 aa).

Positions 1-16 (MSSQQETNDKSNTQGH) are enriched in polar residues. Residues 1 to 52 (MSSQQETNDKSNTQGHPETDPEGKTGTDTGNTEDSPPDTDNVPITDDAIMDD) are disordered.

Its subcellular location is the virion. The chain is Protein 6 (6) from Rice yellow stunt virus (RYSV).